Consider the following 237-residue polypeptide: RNA chaperone ProQ (237 aa).

The disordered stretch occupies residues 106–188 (AKARVQAQRA…QPRPVPVTDI (83 aa)). The span at 146–158 (PRREAGAAPENRK) shows a compositional bias: basic and acidic residues.

Belongs to the ProQ family.

It localises to the cytoplasm. Its function is as follows. RNA chaperone with significant RNA binding, RNA strand exchange and RNA duplexing activities. May regulate ProP activity through an RNA-based, post-transcriptional mechanism. This Yersinia pseudotuberculosis serotype O:1b (strain IP 31758) protein is RNA chaperone ProQ.